A 458-amino-acid chain; its full sequence is MTAEEMKVAENGAQSAPLPLEGVDISPKQDEGVLKVIKREGTGTETAMIGDRVFVHYTGWLLDGTKFDSSLDRKDKFSFDLGKGEVIKAWDIAVATMKVGEVCHITCKPEYAYGSAGSPPKIPPNATLVFEVELFEFKGEDLTEDEDGGIIRRIRTRGEGYARPNDGAMVEVALEGYYNDRLFDQRELCFEVGEGESLDLPCGLEEAIQRMEKGEHSIVYLKPSYAFGSVGKERFQIPPHAELRYEVHLKSFEKAKASWEMNSEEKLEQSNIVKERGTVYFKEGKYKQALLQYKKIVSWLEYESSFSGEEMQKVHALRLASHLNLAMCHLKLQAFSAAIESCNKALELDSNNEKGLFRRGEAHLAVNDFDLARADFQKVLQLYPSNKAAKTQLAVCQQRTRRQLAREKKLYANMFERLAEEEHKAKTEVAAGDHPTDAEMKGEPNNVAGNQAQVKTEA.

An N-acetylmethionine; in peptidyl-prolyl cis-trans isomerase FKBP4; alternate modification is found at methionine 1. Threonine 2 is modified (N-acetylthreonine; in peptidyl-prolyl cis-trans isomerase FKBP4, N-terminally processed; partial). Positions 50–138 constitute a PPIase FKBP-type 1 domain; it reads GDRVFVHYTG…VFEVELFEFK (89 aa). Threonine 143 bears the Phosphothreonine; by CK2 mark. Residues 167-253 enclose the PPIase FKBP-type 2 domain; the sequence is GAMVEVALEG…RYEVHLKSFE (87 aa). Tyrosine 220 bears the Phosphotyrosine mark. The interval 267-400 is interaction with tubulin; sequence LEQSNIVKER…TQLAVCQQRT (134 aa). TPR repeat units lie at residues 270-303, 319-352, and 353-386; these read SNIV…LEYE, LASH…DSNN, and EKGL…YPSN. An N6-acetyllysine modification is found at lysine 282. The residue at position 373 (arginine 373) is an Omega-N-methylarginine. Residues 423-458 form a disordered region; sequence HKAKTEVAAGDHPTDAEMKGEPNNVAGNQAQVKTEA. Threonine 436 is subject to Phosphothreonine. Residue lysine 441 forms a Glycyl lysine isopeptide (Lys-Gly) (interchain with G-Cter in SUMO1) linkage. Over residues 447–458 the composition is skewed to polar residues; it reads VAGNQAQVKTEA.

As to quaternary structure, homodimer. Interacts with GLMN. Associates with HSP90AA1 and HSP70 in steroid hormone receptor complexes. Also interacts with peroxisomal phytanoyl-CoA alpha-hydroxylase (PHYH). Interacts with NR3C1 and dynein. Interacts with HSF1 in the HSP90 complex. Associates with tubulin. Interacts with MAPT/TAU. Interacts (via TPR domain) with S100A1, S100A2 and S100A6; the interaction is Ca(2+) dependent. Interaction with S100A1 and S100A2 (but not with S100A6) leads to inhibition of FKBP4-HSP90 interaction. Interacts with dynein; causes partially NR3C1 transport to the nucleus. Post-translationally, phosphorylation by CK2 results in loss of HSP90 binding activity. Widely detected in the brain (at protein level).

It localises to the cytoplasm. It is found in the cytosol. The protein resides in the mitochondrion. Its subcellular location is the nucleus. The protein localises to the cytoskeleton. It localises to the cell projection. It is found in the axon. It carries out the reaction [protein]-peptidylproline (omega=180) = [protein]-peptidylproline (omega=0). With respect to regulation, inhibited by FK506. In terms of biological role, immunophilin protein with PPIase and co-chaperone activities. Component of unligated steroid receptors heterocomplexes through interaction with heat-shock protein 90 (HSP90). Plays a role in the intracellular trafficking of heterooligomeric forms of steroid hormone receptors between cytoplasm and nuclear compartments. May have a protective role against oxidative stress in mitochondria. Also acts as a regulator of microtubule dynamics by inhibiting MAPT/TAU ability to promote microtubule assembly. The PPIase activity controls neuronal growth cones via regulation of TRPC1 channel opening. The chain is Peptidyl-prolyl cis-trans isomerase FKBP4 (Fkbp4) from Rattus norvegicus (Rat).